We begin with the raw amino-acid sequence, 405 residues long: Solute carrier family 35 member E2B (405 aa).

Positions 1–28 are disordered; it reads MSSSVKTPALEELVPGSEEKPKGRSPLS. Helical transmembrane passes span 81–101, 106–126, 142–162, 167–187, 195–215, 219–241, 264–284, 296–316, 326–346, and 347–367; these read LWFF…SLLG, MLGA…TLVP, FLMT…LGLV, VAVS…VIMS, TGLL…LCTA, SFNV…QNVF, AAAV…PVIG, VVLL…TAYA, FSVA…IVFG, and NKIT…VLLY. A disordered region spans residues 380-405; sequence SLAAATGRAPDDTVEPLLPQDPRQHP.

The protein belongs to the TPT transporter family. SLC35E subfamily.

The protein localises to the membrane. Putative transporter. The polypeptide is Solute carrier family 35 member E2B (SLC35E2B) (Homo sapiens (Human)).